We begin with the raw amino-acid sequence, 215 residues long: Nucleoredoxin-like protein 1 (215 aa).

Residues 1–165 (MADLFLDKIL…VSEIIDRSFL (165 aa)) enclose the Thioredoxin; atypical domain. Positions 185 to 194 (IKYKDETTNE) are enriched in basic and acidic residues. The interval 185–215 (IKYKDETTNEKKKRKHCDDEDEGGGGGTEFF) is disordered.

The protein belongs to the nucleoredoxin family.

The protein resides in the cell projection. The protein localises to the cilium. It is found in the photoreceptor outer segment. Functionally, plays an important role in retinal cone photoreceptor survival. May play a role in cone cell viability, slowing down cone degeneration, does not seem to play a role in degenerating rods. This is Nucleoredoxin-like protein 1 (nxnl1) from Xenopus laevis (African clawed frog).